We begin with the raw amino-acid sequence, 553 residues long: Hyaluronan synthase 3 (553 aa).

The Cytoplasmic segment spans residues M1–S15. A helical membrane pass occupies residues L16–I36. Residues H37–S44 are Extracellular-facing. Residues F45 to L65 traverse the membrane as a helical segment. Residues E66–L377 are Cytoplasmic-facing. The chain crosses the membrane as a helical span at residues W378–I398. Over Q399 to N408 the chain is Extracellular. A helical membrane pass occupies residues I409–F429. The Cytoplasmic portion of the chain corresponds to L430–S440. The chain crosses the membrane as a helical span at residues L441–I461. Residue N462 is glycosylated (N-linked (GlcNAc...) asparagine). The Extracellular segment spans residues N462 to T473. Residues I474–G494 traverse the membrane as a helical segment. Residues L495 to S515 are Cytoplasmic-facing. The helical transmembrane segment at G516–A536 threads the bilayer. At R537–V553 the chain is on the extracellular side.

The protein belongs to the NodC/HAS family. As to quaternary structure, homodimers. Forms heterodimers with HAS2 and HAS1. It depends on Mg(2+) as a cofactor. O-GlcNAcylation increases the hyaluronan synthase activity, HAS3 stability and its plasma membrane residence. The concentration of UDP-GlcNAc controls the level of O-GlcNAc modification.

The protein localises to the cell membrane. Its subcellular location is the golgi apparatus membrane. It localises to the golgi apparatus. The protein resides in the trans-Golgi network membrane. It is found in the early endosome. It catalyses the reaction [hyaluronan](n) + UDP-N-acetyl-alpha-D-glucosamine = N-acetyl-beta-D-glucosaminyl-(1-&gt;4)-[hyaluronan](n) + UDP + H(+). The enzyme catalyses N-acetyl-beta-D-glucosaminyl-(1-&gt;4)-[hyaluronan](n) + UDP-alpha-D-glucuronate = [hyaluronan](n+1) + UDP + H(+). Its pathway is glycan biosynthesis; hyaluronan biosynthesis. Its activity is regulated as follows. The enzymatic activity depends on the availability of cytosolic levels of UDP-GlcUA and UDP-GlcNAc. Functionally, catalyzes the addition of GlcNAc or GlcUA monosaccharides to the nascent hyaluronan polymer. Therefore, it is essential to hyaluronan synthesis a major component of most extracellular matrices that has a structural role in tissues architectures and regulates cell adhesion, migration and differentiation. This is one of three isoenzymes responsible for cellular hyaluronan synthesis. The polypeptide is Hyaluronan synthase 3 (Homo sapiens (Human)).